A 244-amino-acid polypeptide reads, in one-letter code: Adenosylcobinamide-GDP ribazoletransferase (244 aa).

The next 5 helical transmembrane spans lie at 31 to 51 (LLFYPVVGLLFGLLLWLASHL), 55 to 75 (APAPLHAALLLALWVLLSGAL), 109 to 129 (IAVVVLVLVLLLKFCALWVLV), 134 to 154 (GGWLVLAPVVGRAAMLGLFMG), and 188 to 208 (VVLGGSPGLWMLLLSLGVFLW).

This sequence belongs to the CobS family. It depends on Mg(2+) as a cofactor.

Its subcellular location is the cell inner membrane. It carries out the reaction alpha-ribazole + adenosylcob(III)inamide-GDP = adenosylcob(III)alamin + GMP + H(+). The catalysed reaction is alpha-ribazole 5'-phosphate + adenosylcob(III)inamide-GDP = adenosylcob(III)alamin 5'-phosphate + GMP + H(+). Its pathway is cofactor biosynthesis; adenosylcobalamin biosynthesis; adenosylcobalamin from cob(II)yrinate a,c-diamide: step 7/7. Functionally, joins adenosylcobinamide-GDP and alpha-ribazole to generate adenosylcobalamin (Ado-cobalamin). Also synthesizes adenosylcobalamin 5'-phosphate from adenosylcobinamide-GDP and alpha-ribazole 5'-phosphate. This Pseudomonas entomophila (strain L48) protein is Adenosylcobinamide-GDP ribazoletransferase.